A 347-amino-acid chain; its full sequence is MDDQPRLMHSHPGVGMAGHPSLSQHMQDGTGANEGEGGRKQDIGDILQQIMTITDQSLDEAQARKHALNCHRMKPALFNVLCEIKEKTVLSIRGAQEEEPADPQLMRLDNMLLAEGVAGPEKGGGSAAAAAAAAASGGAGADNSAEHSDYRAKLSQIRQIYHTELEKYEQACNEFTTHVMNLLREQSRTRPISPKEIERMVSIIHRKFSSIQMQLKQSTCEAVMILRSRFLDARRKRRNFNKQATEILNEYFYSHLSNPYPSEEAKEELAKKCAITVSQVSNWFGNKRIRYKKNIGKFQEEANIYAAKTAVNATNVSVHGSQANSPSTPSSAGGYPSPCYQSDRRIQ.

Residues 1–40 (MDDQPRLMHSHPGVGMAGHPSLSQHMQDGTGANEGEGGRK) are disordered. Residues 38–232 (GRKQDIGDIL…VMILRSRFLD (195 aa)) form the PBC domain. Residues 45–124 (DILQQIMTIT…EGVAGPEKGG (80 aa)) are PBC-A. Residues 127-232 (AAAAAAAAAS…VMILRSRFLD (106 aa)) form a PBC-B region. A DNA-binding region (homeobox; TALE-type) is located at residues 233–295 (ARRKRRNFNK…NKRIRYKKNI (63 aa)). A compositionally biased stretch (polar residues) spans 318–331 (VHGSQANSPSTPSS). The tract at residues 318 to 347 (VHGSQANSPSTPSSAGGYPSPCYQSDRRIQ) is disordered.

It belongs to the TALE/PBX homeobox family. Forms a heterodimer with meis1; the interaction is necessary for neural fate induction.

The protein resides in the nucleus. Its function is as follows. Acts as a transcriptional activator in complex with isoform 2 of meis1, to induce posterior neural and neural crest gene expression, and thereby specify hindbrain and neural crest cell fate. Binds to a highly conserved region in the promoter of the neural crest gene zic3. Required for the nuclear transport or retention of meis1. The polypeptide is Pre-B-cell leukemia transcription factor 1 (Xenopus tropicalis (Western clawed frog)).